Reading from the N-terminus, the 1058-residue chain is Isoleucine--tRNA ligase (1058 aa).

The short motif at 48 to 58 (PYTTGHIHLGT) is the 'HIGH' region element. The short motif at 596–600 (KMSKS) is the 'KMSKS' region element. Lysine 599 is a binding site for ATP.

The protein belongs to the class-I aminoacyl-tRNA synthetase family. IleS type 2 subfamily. Monomer. Zn(2+) serves as cofactor.

The protein resides in the cytoplasm. The catalysed reaction is tRNA(Ile) + L-isoleucine + ATP = L-isoleucyl-tRNA(Ile) + AMP + diphosphate. In terms of biological role, catalyzes the attachment of isoleucine to tRNA(Ile). As IleRS can inadvertently accommodate and process structurally similar amino acids such as valine, to avoid such errors it has two additional distinct tRNA(Ile)-dependent editing activities. One activity is designated as 'pretransfer' editing and involves the hydrolysis of activated Val-AMP. The other activity is designated 'posttransfer' editing and involves deacylation of mischarged Val-tRNA(Ile). The polypeptide is Isoleucine--tRNA ligase (Methanosarcina acetivorans (strain ATCC 35395 / DSM 2834 / JCM 12185 / C2A)).